The chain runs to 694 residues: Elongation factor G (694 aa).

The region spanning 6–288 (KLYRNIGIAA…GVIEYLPSPT (283 aa)) is the tr-type G domain. Residues 15–22 (AHVDAGKT), 86–90 (DTPGH), and 140–143 (NKMD) each bind GTP.

This sequence belongs to the TRAFAC class translation factor GTPase superfamily. Classic translation factor GTPase family. EF-G/EF-2 subfamily.

Its subcellular location is the cytoplasm. Functionally, catalyzes the GTP-dependent ribosomal translocation step during translation elongation. During this step, the ribosome changes from the pre-translocational (PRE) to the post-translocational (POST) state as the newly formed A-site-bound peptidyl-tRNA and P-site-bound deacylated tRNA move to the P and E sites, respectively. Catalyzes the coordinated movement of the two tRNA molecules, the mRNA and conformational changes in the ribosome. This Legionella pneumophila (strain Corby) protein is Elongation factor G.